A 64-amino-acid polypeptide reads, in one-letter code: Conotoxin Pn-B01122 (64 aa).

A signal peptide spans Met-1–Ala-22. A propeptide spanning residues Arg-23–Asn-48 is cleaved from the precursor.

Belongs to the conotoxin T superfamily. Contains 2 disulfide bonds that can be either 'C1-C3, C2-C4' or 'C1-C4, C2-C3', since these disulfide connectivities have been observed for conotoxins with cysteine framework V (for examples, see AC P0DQQ7 and AC P81755). Expressed by the venom duct.

It is found in the secreted. In Conus pennaceus (Feathered cone), this protein is Conotoxin Pn-B01122.